The following is a 643-amino-acid chain: UPF0313 protein CLD_0573 (643 aa).

The Radical SAM core domain maps to 295-566 (AIKEVKFSIT…RMQRALLQFS (272 aa)). C309, C313, and C316 together coordinate [4Fe-4S] cluster. Positions 598 to 643 (NKPYKKSHKKNNAKNNNNHYNKNNNKNKDISKKNKKNSLSKHKKRK) are disordered. Over residues 600-609 (PYKKSHKKNN) the composition is skewed to basic residues. Residues 610–621 (AKNNNNHYNKNN) are compositionally biased toward low complexity. The span at 630–643 (KNKKNSLSKHKKRK) shows a compositional bias: basic residues.

The protein belongs to the UPF0313 family. It depends on [4Fe-4S] cluster as a cofactor.

The protein is UPF0313 protein CLD_0573 of Clostridium botulinum (strain Okra / Type B1).